We begin with the raw amino-acid sequence, 289 residues long: Syntaxin-3 (289 aa).

The Cytoplasmic segment spans residues 1 to 263 (MKDRLEQLKA…MKYQGQARKK (263 aa)). Residues 32 to 111 (MDEFFSEIEE…IEEDEVRSSA (80 aa)) are a coiled coil. The t-SNARE coiled-coil homology domain maps to 191–253 (LSEIEGRHKD…EKARDETKRA (63 aa)). Residues 264–284 (LIIIIVIVVVLLGILALIIGL) form a helical; Anchor for type IV membrane protein membrane-spanning segment. Residues 285–289 (SVGLK) are Extracellular-facing.

This sequence belongs to the syntaxin family. In terms of assembly, interacts with REEP6. Interacts with PRPH2 in rod and cone photoreceptors. Interacts with ROM1. Interacts with SNAP25. Interacts with VAMP2. In terms of tissue distribution, heart, spleen, lung and kidney.

The protein localises to the membrane. In terms of biological role, potentially involved in docking of synaptic vesicles at presynaptic active zones. Apical receptor involved in membrane fusion of apical vesicles. Essential for survival of retinal photoreceetors. The protein is Syntaxin-3 (Stx3) of Rattus norvegicus (Rat).